Consider the following 159-residue polypeptide: Transcriptional repressor NrdR (159 aa).

Residues Met1–Asp21 are disordered. Residues Cys3–Cys34 fold into a zinc finger. Positions Leu49–Glu139 constitute an ATP-cone domain.

This sequence belongs to the NrdR family. It depends on Zn(2+) as a cofactor.

Its function is as follows. Negatively regulates transcription of bacterial ribonucleotide reductase nrd genes and operons by binding to NrdR-boxes. The chain is Transcriptional repressor NrdR from Streptococcus thermophilus (strain CNRZ 1066).